Reading from the N-terminus, the 381-residue chain is cAMP-dependent protein kinase type I-beta regulatory subunit (381 aa).

The dimerization and phosphorylation stretch occupies residues 1-136 (MASPSCFHSE…ALAKAISKNV (136 aa)). S3 carries the post-translational modification Phosphoserine. The residue at position 21 (Y21) is a 3'-nitrotyrosine. A disordered region spans residues 66–88 (LARQKSNSQCDSHDEEISPTPPN). A phosphoserine mark is found at S77 and S83. Phosphothreonine is present on T85. A Pseudophosphorylation motif motif is present at residues 96–100 (RRGGV). R97 bears the Omega-N-methylarginine mark. 3',5'-cyclic AMP-binding positions include 137-254 (LFSH…SKVS), E202, R211, 255-381 (ILES…SLTV), E326, and R335.

It belongs to the cAMP-dependent kinase regulatory chain family. In terms of assembly, the inactive holoenzyme is composed of two regulatory chains and two catalytic chains. Activation by cAMP releases the two active catalytic monomers and the regulatory dimer. Interacts with PRKX; regulates this cAMP-dependent protein kinase. Interacts with smAKAP; this interaction may target PRKAR1B to the plasma membrane. In terms of processing, the pseudophosphorylation site binds to the substrate-binding region of the catalytic chain, resulting in the inhibition of its activity. Abundant in brain and testis. No expression in lung, heart, liver, spleen, kidney and skeletal muscle.

The protein resides in the cell membrane. Its function is as follows. Regulatory subunit of the cAMP-dependent protein kinases involved in cAMP signaling in cells. The protein is cAMP-dependent protein kinase type I-beta regulatory subunit (Prkar1b) of Rattus norvegicus (Rat).